Reading from the N-terminus, the 86-residue chain is MANIKSQKKRVLTNEKAHLRNVAVKSGLKTAIRATREAIAAGDKAAAEAAYKVAAQKLDKAAGAGVIHRNQAANRKSGLAVAINAL.

The protein belongs to the bacterial ribosomal protein bS20 family.

Binds directly to 16S ribosomal RNA. This is Small ribosomal subunit protein bS20 from Bifidobacterium longum subsp. infantis (strain ATCC 15697 / DSM 20088 / JCM 1222 / NCTC 11817 / S12).